Reading from the N-terminus, the 669-residue chain is DNA ligase (669 aa).

Residues 34–38 (DAEYD), 83–84 (SL), and Glu-114 each bind NAD(+). The active-site N6-AMP-lysine intermediate is Lys-116. NAD(+) is bound by residues Arg-137, Glu-171, Lys-287, and Lys-311. Cys-405, Cys-408, Cys-423, and Cys-428 together coordinate Zn(2+). The region spanning 591–669 (NVESYFAGKT…EERFLQELNK (79 aa)) is the BRCT domain.

It belongs to the NAD-dependent DNA ligase family. LigA subfamily. The cofactor is Mg(2+). It depends on Mn(2+) as a cofactor.

The enzyme catalyses NAD(+) + (deoxyribonucleotide)n-3'-hydroxyl + 5'-phospho-(deoxyribonucleotide)m = (deoxyribonucleotide)n+m + AMP + beta-nicotinamide D-nucleotide.. Its function is as follows. DNA ligase that catalyzes the formation of phosphodiester linkages between 5'-phosphoryl and 3'-hydroxyl groups in double-stranded DNA using NAD as a coenzyme and as the energy source for the reaction. It is essential for DNA replication and repair of damaged DNA. The sequence is that of DNA ligase from Bacillus cereus (strain ATCC 10987 / NRS 248).